The primary structure comprises 232 residues: Orotidine 5'-phosphate decarboxylase (232 aa).

Residues D11, K32, D59–T68, T116, R178, Q188, G208, and R209 contribute to the substrate site. K61 (proton donor) is an active-site residue.

The protein belongs to the OMP decarboxylase family. Type 1 subfamily. Homodimer.

It carries out the reaction orotidine 5'-phosphate + H(+) = UMP + CO2. Its pathway is pyrimidine metabolism; UMP biosynthesis via de novo pathway; UMP from orotate: step 2/2. Catalyzes the decarboxylation of orotidine 5'-monophosphate (OMP) to uridine 5'-monophosphate (UMP). This chain is Orotidine 5'-phosphate decarboxylase, found in Synechococcus sp. (strain JA-3-3Ab) (Cyanobacteria bacterium Yellowstone A-Prime).